A 178-amino-acid chain; its full sequence is MTHKSVRDYIRTIVDFPHEGILFRDVTTLFADPRGFRIAIDQLLAPYAGMRFDKVAGLEARGFILGGAVAHQLSTGFVPIRKKGKLPGRTISVSYQLEYGEAVVEVHDDAIQAGEKVLLVDDLLATGGTAEAGIKLIEQLGGQVVGCAFVVDLPDLGGRKRLEAMGMEVHALCAFEGL.

It belongs to the purine/pyrimidine phosphoribosyltransferase family. Homodimer.

The protein resides in the cytoplasm. It catalyses the reaction AMP + diphosphate = 5-phospho-alpha-D-ribose 1-diphosphate + adenine. Its pathway is purine metabolism; AMP biosynthesis via salvage pathway; AMP from adenine: step 1/1. In terms of biological role, catalyzes a salvage reaction resulting in the formation of AMP, that is energically less costly than de novo synthesis. The chain is Adenine phosphoribosyltransferase from Cereibacter sphaeroides (strain KD131 / KCTC 12085) (Rhodobacter sphaeroides).